We begin with the raw amino-acid sequence, 493 residues long: Alpha-amylase-related protein (493 aa).

A signal peptide spans M1–A19. Q20 carries the post-translational modification Pyrrolidone carboxylic acid. A disulfide bond links C47 and C103. Residues N117, Q168, and D177 each contribute to the Ca(2+) site. Cysteines 156 and 170 form a disulfide. R205 contributes to the chloride binding site. The active-site Nucleophile is the D207. A Ca(2+)-binding site is contributed by H211. The active-site Proton donor is the E244. Residues N307 and R342 each contribute to the chloride site. 3 cysteine pairs are disulfide-bonded: C375–C381, C417–C440, and C447–C459.

The protein belongs to the glycosyl hydrolase 13 family. As to quaternary structure, monomer. Ca(2+) serves as cofactor. Chloride is required as a cofactor.

It is found in the secreted. The enzyme catalyses Endohydrolysis of (1-&gt;4)-alpha-D-glucosidic linkages in polysaccharides containing three or more (1-&gt;4)-alpha-linked D-glucose units.. In Drosophila yakuba (Fruit fly), this protein is Alpha-amylase-related protein (Amyrel).